The sequence spans 525 residues: Calcium uptake protein 1 homolog, mitochondrial (525 aa).

The disordered stretch occupies residues 109 to 146; it reads ADAGQRPSSAADVNGEDKSSESESEDSEDEEAGSDLHL. The segment covering 130 to 141 has biased composition (acidic residues); that stretch reads SESEDSEDEEAG. EF-hand domains are found at residues 268 to 303 and 459 to 494; these read ISRR…VRQQ and LSDH…RVQR. Residues D281, N283, D285, D287, E292, D472, N474, D476, Q478, and E483 each contribute to the Ca(2+) site.

This sequence belongs to the MICU1 family. MICU1 subfamily.

Its subcellular location is the mitochondrion intermembrane space. It is found in the mitochondrion inner membrane. Its function is as follows. Calcium sensor of the mitochondrial calcium uniporter (MCU) channel, which senses calcium level via its EF-hand domains. At low calcium levels, MICU1 occludes the pore of the MCU channel, preventing mitochondrial calcium uptake. At higher calcium levels, calcium-binding to MICU1 induces a conformational change that weakens MCU-MICU1 interactions and moves MICU1 away from the pore, allowing calcium permeation through the MCU channel. Also required to protect against manganese toxicity by preventing manganese uptake by MCU. During development, required in alpha/beta or gamma mushroom body neurons to support olfactory intermediate-term memory in the adult. In Drosophila melanogaster (Fruit fly), this protein is Calcium uptake protein 1 homolog, mitochondrial.